A 1158-amino-acid polypeptide reads, in one-letter code: Type IV pilus biogenesis factor PilY1 (1158 aa).

A signal peptide spans 1–29; the sequence is MIHQITRAGKSLLAAGCTLSILFASDSYA. Residues D841, N843, D845, I847, and D849 each coordinate Ca(2+).

Belongs to the PilY1 family.

It is found in the fimbrium. It localises to the membrane. Its subcellular location is the cytoplasm. The protein resides in the cytosol. Its function is as follows. Involved in pilus assembly, twitching motility and adhesion to host cells. Primes type IV pili (T4P) assembly and is required for inclusion of minor pilins PilV, PilW and PilX to the surface pili. Stabilizes assembled pilus fibers likely by antagonizing retraction mediated by PilT. Calcium-binding and calcium release by PilY1 seem to be essential for twitching motility and for regulation of pilus retraction dynamics of PilT. Regulates surface-activated virulence possibly by acting as a surface-attachment mechanosensor. The protein is Type IV pilus biogenesis factor PilY1 of Pseudomonas aeruginosa (strain UCBPP-PA14).